Consider the following 162-residue polypeptide: Succinate dehydrogenase assembly factor 2-A, mitochondrial (162 aa).

This sequence belongs to the SDHAF2 family. As to quaternary structure, interacts with the flavoprotein subunit within the SDH catalytic dimer.

It localises to the mitochondrion matrix. Functionally, plays an essential role in the assembly of succinate dehydrogenase (SDH), an enzyme complex (also referred to as respiratory complex II) that is a component of both the tricarboxylic acid (TCA) cycle and the mitochondrial electron transport chain, and which couples the oxidation of succinate to fumarate with the reduction of ubiquinone (coenzyme Q) to ubiquinol. Required for flavinylation (covalent attachment of FAD) of the flavoprotein subunit of the SDH catalytic dimer. This Drosophila yakuba (Fruit fly) protein is Succinate dehydrogenase assembly factor 2-A, mitochondrial.